The chain runs to 398 residues: Serine/threonine-protein phosphatase 4 regulatory subunit 2-B (398 aa).

Residues 138–398 (SSEKNTSPSL…NAPEEPMEQD (261 aa)) form a disordered region. 3 stretches are compositionally biased toward polar residues: residues 139-149 (SEKNTSPSLNR), 156-170 (PSNSQSYTDRSNVNG), and 183-193 (TLSSPMNTNGL). Positions 197-211 (MENKESDLQQKEKSL) are enriched in basic and acidic residues. Positions 278 to 294 (ASTSADKGKESCQTAQT) are enriched in polar residues. Residues 338-366 (SESACSLNSEEPNSAAAAASTAGTDSSEG) show a composition bias toward low complexity.

The protein belongs to the PPP4R2 family. Serine/threonine-protein phosphatase 4 (PP4) occurs in different assemblies of the catalytic and one or more regulatory subunits.

Functionally, regulatory subunit of serine/threonine-protein phosphatase 4 (PP4). The chain is Serine/threonine-protein phosphatase 4 regulatory subunit 2-B (ppp4r2-b) from Xenopus laevis (African clawed frog).